The following is a 58-amino-acid chain: Sec-independent protein translocase protein TatA (58 aa).

Residues M1 to F21 traverse the membrane as a helical segment.

This sequence belongs to the TatA/E family. In terms of assembly, forms a complex with TatC.

It is found in the cell membrane. In terms of biological role, part of the twin-arginine translocation (Tat) system that transports large folded proteins containing a characteristic twin-arginine motif in their signal peptide across membranes. TatA could form the protein-conducting channel of the Tat system. This is Sec-independent protein translocase protein TatA from Bacillus cytotoxicus (strain DSM 22905 / CIP 110041 / 391-98 / NVH 391-98).